We begin with the raw amino-acid sequence, 229 residues long: Uracil-DNA glycosylase (229 aa).

The Proton acceptor role is filled by aspartate 70.

It belongs to the uracil-DNA glycosylase (UDG) superfamily. UNG family.

The protein localises to the cytoplasm. It carries out the reaction Hydrolyzes single-stranded DNA or mismatched double-stranded DNA and polynucleotides, releasing free uracil.. Functionally, excises uracil residues from the DNA which can arise as a result of misincorporation of dUMP residues by DNA polymerase or due to deamination of cytosine. The sequence is that of Uracil-DNA glycosylase from Chlamydia felis (strain Fe/C-56) (Chlamydophila felis).